An 80-amino-acid polypeptide reads, in one-letter code: Defensin-like protein 207 (80 aa).

The N-terminal stretch at 1-29 (MAKNLNSVSFIVLLLVLLVASTEILKSDA) is a signal peptide. 3 cysteine pairs are disulfide-bonded: Cys-38–Cys-64, Cys-50–Cys-75, and Cys-54–Cys-77.

It belongs to the DEFL family.

Its subcellular location is the secreted. The polypeptide is Defensin-like protein 207 (Arabidopsis thaliana (Mouse-ear cress)).